We begin with the raw amino-acid sequence, 638 residues long: Carbon monoxide dehydrogenase (638 aa).

Residues Cys46, Cys55, Cys58, Cys63, and Cys74 each coordinate [4Fe-4S] cluster. [Ni-4Fe-5S] cluster is bound by residues His265, Cys299, Cys343, Cys452, Cys483, and Cys524.

It belongs to the Ni-containing carbon monoxide dehydrogenase family. In terms of assembly, homodimer. [4Fe-4S] cluster serves as cofactor. The cofactor is [Ni-4Fe-5S] cluster.

The enzyme catalyses CO + 2 oxidized [2Fe-2S]-[ferredoxin] + H2O = 2 reduced [2Fe-2S]-[ferredoxin] + CO2 + 2 H(+). In terms of biological role, CODH oxidizes carbon monoxide coupled, via CooF, to the reduction of a hydrogen cation by a hydrogenase (possibly CooH). This is Carbon monoxide dehydrogenase (cooS) from Methanopyrus kandleri (strain AV19 / DSM 6324 / JCM 9639 / NBRC 100938).